The chain runs to 423 residues: UPF0229 protein VV2350 (423 aa).

Residues 81–111 form a disordered region; it reads QFITGDKIERPKGGQGGGGAGDGDASADGEG. Residues 93–102 show a composition bias toward gly residues; that stretch reads GGQGGGGAGD.

The protein belongs to the UPF0229 family.

The polypeptide is UPF0229 protein VV2350 (Vibrio vulnificus (strain YJ016)).